The chain runs to 192 residues: Inosine triphosphate pyrophosphatase (192 aa).

11–16 (TGNKNK) is a binding site for ITP. Glu41 is a Mg(2+) binding site. ITP-binding positions include Lys53, 69–70 (DT), Lys86, 146–149 (FGWD), Lys169, and 174–175 (HR).

This sequence belongs to the HAM1 NTPase family. Homodimer. Mg(2+) is required as a cofactor. It depends on Mn(2+) as a cofactor.

The protein localises to the cytoplasm. The enzyme catalyses ITP + H2O = IMP + diphosphate + H(+). It carries out the reaction dITP + H2O = dIMP + diphosphate + H(+). It catalyses the reaction XTP + H2O = XMP + diphosphate + H(+). Pyrophosphatase that hydrolyzes non-canonical purine nucleotides such as inosine triphosphate (ITP), deoxyinosine triphosphate (dITP) or xanthosine 5'-triphosphate (XTP) to their respective monophosphate derivatives. The enzyme does not distinguish between the deoxy- and ribose forms. Probably excludes non-canonical purines from RNA and DNA precursor pools, thus preventing their incorporation into RNA and DNA and avoiding chromosomal lesions. In Ciona intestinalis (Transparent sea squirt), this protein is Inosine triphosphate pyrophosphatase.